Consider the following 230-residue polypeptide: Translation initiation factor IF-3 (230 aa).

2 disordered regions span residues 1–21 (MAIQHRDPRGGGGSRDARTNR) and 184–230 (LQSQ…AAQR). Positions 193–208 (AAAAAAPAAAPAAGAP) are enriched in low complexity. Pro residues predominate over residues 209–220 (APAPAPAAPAPA). Positions 221 to 230 (PTAADPAAQR) are enriched in low complexity.

This sequence belongs to the IF-3 family. As to quaternary structure, monomer.

Its subcellular location is the cytoplasm. Its function is as follows. IF-3 binds to the 30S ribosomal subunit and shifts the equilibrium between 70S ribosomes and their 50S and 30S subunits in favor of the free subunits, thus enhancing the availability of 30S subunits on which protein synthesis initiation begins. The protein is Translation initiation factor IF-3 of Anaeromyxobacter dehalogenans (strain 2CP-1 / ATCC BAA-258).